We begin with the raw amino-acid sequence, 377 residues long: 3-dehydroquinate synthase (377 aa).

NAD(+) is bound by residues 115-119, 139-140, K152, and K161; these read GVIGD and TS. The Zn(2+) site is built by E194, H256, and H275.

Belongs to the sugar phosphate cyclases superfamily. Dehydroquinate synthase family. The cofactor is NAD(+). Co(2+) serves as cofactor. Requires Zn(2+) as cofactor.

Its subcellular location is the cytoplasm. The enzyme catalyses 7-phospho-2-dehydro-3-deoxy-D-arabino-heptonate = 3-dehydroquinate + phosphate. It participates in metabolic intermediate biosynthesis; chorismate biosynthesis; chorismate from D-erythrose 4-phosphate and phosphoenolpyruvate: step 2/7. Its function is as follows. Catalyzes the conversion of 3-deoxy-D-arabino-heptulosonate 7-phosphate (DAHP) to dehydroquinate (DHQ). The chain is 3-dehydroquinate synthase from Agrobacterium fabrum (strain C58 / ATCC 33970) (Agrobacterium tumefaciens (strain C58)).